The sequence spans 286 residues: Thiazole synthase (286 aa).

Lys122 acts as the Schiff-base intermediate with DXP in catalysis. 1-deoxy-D-xylulose 5-phosphate contacts are provided by residues Gly183, 209–210 (AG), and 231–232 (NT).

Belongs to the ThiG family. In terms of assembly, homotetramer. Forms heterodimers with either ThiH or ThiS.

The protein resides in the cytoplasm. It carries out the reaction [ThiS sulfur-carrier protein]-C-terminal-Gly-aminoethanethioate + 2-iminoacetate + 1-deoxy-D-xylulose 5-phosphate = [ThiS sulfur-carrier protein]-C-terminal Gly-Gly + 2-[(2R,5Z)-2-carboxy-4-methylthiazol-5(2H)-ylidene]ethyl phosphate + 2 H2O + H(+). Its pathway is cofactor biosynthesis; thiamine diphosphate biosynthesis. Catalyzes the rearrangement of 1-deoxy-D-xylulose 5-phosphate (DXP) to produce the thiazole phosphate moiety of thiamine. Sulfur is provided by the thiocarboxylate moiety of the carrier protein ThiS. In vitro, sulfur can be provided by H(2)S. The chain is Thiazole synthase from Synechococcus elongatus (strain ATCC 33912 / PCC 7942 / FACHB-805) (Anacystis nidulans R2).